A 347-amino-acid polypeptide reads, in one-letter code: GMP reductase (347 aa).

108 to 131 (ADFEKTKQILDLNSALNFVCIDVA) is an NADP(+) binding site. K(+) contacts are provided by glycine 181 and glycine 183. The active-site Thioimidate intermediate is the cysteine 186. 216–239 (IVSDGGCTTPGDVAKAFGGGADFV) provides a ligand contact to NADP(+).

Belongs to the IMPDH/GMPR family. GuaC type 1 subfamily. Homotetramer.

The catalysed reaction is IMP + NH4(+) + NADP(+) = GMP + NADPH + 2 H(+). In terms of biological role, catalyzes the irreversible NADPH-dependent deamination of GMP to IMP. It functions in the conversion of nucleobase, nucleoside and nucleotide derivatives of G to A nucleotides, and in maintaining the intracellular balance of A and G nucleotides. The protein is GMP reductase of Escherichia coli O81 (strain ED1a).